Consider the following 210-residue polypeptide: Putative 3-methyladenine DNA glycosylase (210 aa).

Residues 180–210 (SRPPPGAAAARAARAPAAPAPRPRRPRGSGP) form a disordered region. Residues 186 to 196 (AAAARAARAPA) show a composition bias toward low complexity. A compositionally biased stretch (basic residues) spans 201 to 210 (RPRRPRGSGP).

Belongs to the DNA glycosylase MPG family.

The protein is Putative 3-methyladenine DNA glycosylase of Anaeromyxobacter dehalogenans (strain 2CP-1 / ATCC BAA-258).